A 350-amino-acid chain; its full sequence is HTH-type DNA-binding transcriptional activator EutR (350 aa).

The HTH araC/xylS-type domain occupies 243 to 344 (SRAREYVLEN…AEKPSLTLHQ (102 aa)). 2 DNA-binding regions (H-T-H motif) span residues 260–281 (LDLC…HAIL) and 311–334 (VKDA…QQLF).

Its pathway is amine and polyamine degradation; ethanolamine degradation. Activates the transcription of the eut operon, allowing utilization of ethanolamine (EA). Positively regulates its own transcription. Probably binds EA and vitamin B12 as effectors. Competes with ethanolamine ammonia-lysase (EAL, the first enzyme in the EA degradation pathway) for adenosylcobalamin. Ethanolamine-associated signaling mediated via this protein, but not EA degradation, impacts S.typhimurium survival within macrophages. Binds the promoter of ssrB and eutS in vitro; in mouse infection models binding to ssrB probably induces all 4 operons of pathogenicity island SPI-2. In terms of biological role, expression of the eut operon allows this bacteria to use ethanolamine (EA) as a carbon, nitrogen and energy source. It relies on cobalamin (vitamin B12) both as a cofactor for the ethanolamine ammonia-lyase (EAL) activity and to induce the operon. EA enhances bacterial survival in macrophages in a concentration-dependent manner, suggesting it is an important nutrient in infection. This chain is HTH-type DNA-binding transcriptional activator EutR, found in Salmonella typhimurium (strain LT2 / SGSC1412 / ATCC 700720).